The primary structure comprises 320 residues: Aspartate carbamoyltransferase catalytic subunit (320 aa).

Carbamoyl phosphate-binding residues include R68 and T69. K96 is an L-aspartate binding site. Carbamoyl phosphate-binding residues include R118, H148, and Q151. L-aspartate-binding residues include R181 and R236. Positions 277 and 278 each coordinate carbamoyl phosphate.

This sequence belongs to the aspartate/ornithine carbamoyltransferase superfamily. ATCase family. In terms of assembly, heterododecamer (2C3:3R2) of six catalytic PyrB chains organized as two trimers (C3), and six regulatory PyrI chains organized as three dimers (R2).

The catalysed reaction is carbamoyl phosphate + L-aspartate = N-carbamoyl-L-aspartate + phosphate + H(+). It functions in the pathway pyrimidine metabolism; UMP biosynthesis via de novo pathway; (S)-dihydroorotate from bicarbonate: step 2/3. Functionally, catalyzes the condensation of carbamoyl phosphate and aspartate to form carbamoyl aspartate and inorganic phosphate, the committed step in the de novo pyrimidine nucleotide biosynthesis pathway. The chain is Aspartate carbamoyltransferase catalytic subunit from Acidovorax ebreus (strain TPSY) (Diaphorobacter sp. (strain TPSY)).